Reading from the N-terminus, the 252-residue chain is 3-dehydroquinate dehydratase (252 aa).

3-dehydroquinate-binding positions include Ser-21, 46–48 (EWR), and Arg-82. His-143 acts as the Proton donor/acceptor in catalysis. Lys-170 functions as the Schiff-base intermediate with substrate in the catalytic mechanism. Residues Arg-213, Ser-232, and Gln-236 each coordinate 3-dehydroquinate.

The protein belongs to the type-I 3-dehydroquinase family. In terms of assembly, homodimer.

The enzyme catalyses 3-dehydroquinate = 3-dehydroshikimate + H2O. It participates in metabolic intermediate biosynthesis; chorismate biosynthesis; chorismate from D-erythrose 4-phosphate and phosphoenolpyruvate: step 3/7. Functionally, involved in the third step of the chorismate pathway, which leads to the biosynthesis of aromatic amino acids. Catalyzes the cis-dehydration of 3-dehydroquinate (DHQ) and introduces the first double bond of the aromatic ring to yield 3-dehydroshikimate. The sequence is that of 3-dehydroquinate dehydratase from Escherichia coli O139:H28 (strain E24377A / ETEC).